A 282-amino-acid polypeptide reads, in one-letter code: uncharacterized protein (282 aa).

Positions 205–277 form a coiled coil; it reads LAQQRRVYAQ…DELQNKARDA (73 aa).

This is an uncharacterized protein from Treponema pallidum (strain Nichols).